A 109-amino-acid polypeptide reads, in one-letter code: Co-chaperonin GroES (109 aa).

Belongs to the GroES chaperonin family. In terms of assembly, heptamer of 7 subunits arranged in a ring. Interacts with the chaperonin GroEL.

Its subcellular location is the cytoplasm. Its function is as follows. Together with the chaperonin GroEL, plays an essential role in assisting protein folding. The GroEL-GroES system forms a nano-cage that allows encapsulation of the non-native substrate proteins and provides a physical environment optimized to promote and accelerate protein folding. GroES binds to the apical surface of the GroEL ring, thereby capping the opening of the GroEL channel. In Methanosarcina acetivorans (strain ATCC 35395 / DSM 2834 / JCM 12185 / C2A), this protein is Co-chaperonin GroES.